A 638-amino-acid chain; its full sequence is MSGNSAANAAALAAFNGIGKKKKESTTKLNGTDNNTNHLGVIGSTSNQTKQHQQQQQQPQALRTPLPAHPSRKKSNKFSQLKRLNTAPAMASLQPALQIASPSISPTQPSAPASALDSDPDYFTLSPHTIPSKNEIAKSPQTPQDMIRNVRQSIELKAIPNNAQAKRLSVDYSPQEMLKNLRHSLHSRTKTSPMLTTSDKMGQTMLAEMRDRLENTRRIASNSVASLSLSPNLDFNKSTSDVSNLSHHYDVDTVSTDSFASFNSSINDRHLPHGISIDVTNHDSDEDEIDDREREEDHEPLDNGELKSTNNKVTVSSRLRRKPPPGEDFQMQLNDKSRDTISSGSYSLNPDEVYSFTDPDSYENLVSEVEVGETTRLFPQFPDANHYHQHSSKFRKKHQKVKPINGIYYRDMDSSNTSDTEESTSNLPSRSTTPLLGQPQQQVHFRSTMRKANTKKDKKSRFNELKPWKNHNDLNYLTDQEKKRYEGIWASNKGNYMSQVVIKLHGVNYETQKDPKEEAKMEHSRTAALLSAAAVEDSNYNGNNSLHNLDSVEINQLICGPVVKRIWKRSRLPSDTLEKIWNLIDFRRDGTLNKNEFLVGMWLVDQCLYGRKLPKKVDNVVWDSLGGIGVNVTVKKKK.

Disordered stretches follow at residues 15 to 78, 270 to 356, and 409 to 440; these read FNGI…SNKF, HLPH…VYSF, and YRDMDSSNTSDTEESTSNLPSRSTTPLLGQPQ. Residues 27-47 are compositionally biased toward polar residues; it reads TKLNGTDNNTNHLGVIGSTSN. A compositionally biased stretch (low complexity) spans 48–60; sequence QTKQHQQQQQQPQ. The span at 291-305 shows a compositional bias: basic and acidic residues; sequence DREREEDHEPLDNGE. Residues 306-317 are compositionally biased toward polar residues; that stretch reads LKSTNNKVTVSS. The segment covering 414–426 has biased composition (low complexity); sequence SSNTSDTEESTSN. Positions 427-440 are enriched in polar residues; sequence LPSRSTTPLLGQPQ. In terms of domain architecture, EH spans 539–628; the sequence is NYNGNNSLHN…NVVWDSLGGI (90 aa). The EF-hand domain occupies 572 to 607; sequence LPSDTLEKIWNLIDFRRDGTLNKNEFLVGMWLVDQC.

It belongs to the IRS4 family.

Its function is as follows. Positive regulator of phosphatidylinositol 4,5-bisphosphate turnover and negatively regulates signaling through the cell integrity pathway. Involved in rDNA silencing. In Candida albicans (strain SC5314 / ATCC MYA-2876) (Yeast), this protein is Increased rDNA silencing protein 4 (IRS4).